A 441-amino-acid chain; its full sequence is Aminopeptidase C (441 aa).

Active-site residues include Cys-70, His-361, and Asn-382.

It belongs to the peptidase C1 family.

It carries out the reaction Inactivates bleomycin B2 (a cytotoxic glycometallopeptide) by hydrolysis of a carboxyamide bond of beta-aminoalanine, but also shows general aminopeptidase activity. The specificity varies somewhat with source, but amino acid arylamides of Met, Leu and Ala are preferred.. The protein is Aminopeptidase C (pepC) of Listeria monocytogenes serovar 1/2a (strain ATCC BAA-679 / EGD-e).